Consider the following 688-residue polypeptide: Thyroid hormone-induced protein B (688 aa).

Residues 1-20 (MMLSHWVLLLSLGAVWLAEG) form the signal peptide. MAM domains follow at residues 26–169 (GSCT…GYCI), 170–330 (ECDF…SCSG), 341–500 (AGCD…SCKI), and 509–669 (GKCT…PCND). Residues asparagine 32 and asparagine 135 are each glycosylated (N-linked (GlcNAc...) asparagine). 2 N-linked (GlcNAc...) asparagine glycosylation sites follow: asparagine 358 and asparagine 668.

The protein localises to the membrane. It is found in the secreted. The protein resides in the extracellular space. The sequence is that of Thyroid hormone-induced protein B from Xenopus laevis (African clawed frog).